A 291-amino-acid polypeptide reads, in one-letter code: Beta-lactamase CTX-M-14 (291 aa).

The N-terminal stretch at 1–28 is a signal peptide; sequence MVTKRVQRMMFAAAACIPLLLGSAPLYA. The active-site Nucleophile; acyl-ester intermediate is the Ser73. A beta-lactam is bound by residues Lys76, Ser133, Glu169, and Ser240.

Belongs to the class-A beta-lactamase family. Monomer.

The protein localises to the secreted. The enzyme catalyses a beta-lactam + H2O = a substituted beta-amino acid. Its activity is regulated as follows. Inhibited by the beta-lactamase-blocking agents clavulanic acid, tazobactam and sulbactam. Extended-spectrum beta-lactamase (ESBL) which confers resistance to penicillins, as well as first, second, and third-generation cephalosporins. Has cefotaxime-hydrolyzing activity. The sequence is that of Beta-lactamase CTX-M-14 from Escherichia coli.